We begin with the raw amino-acid sequence, 120 residues long: NAD(P)H-quinone oxidoreductase subunit 3, chloroplastic (120 aa).

Transmembrane regions (helical) follow at residues 9–29 (FFWA…FISG), 64–84 (MFAL…PWAM), and 88–108 (VLGV…IIGL).

Belongs to the complex I subunit 3 family. In terms of assembly, NDH is composed of at least 16 different subunits, 5 of which are encoded in the nucleus.

It localises to the plastid. Its subcellular location is the chloroplast thylakoid membrane. The catalysed reaction is a plastoquinone + NADH + (n+1) H(+)(in) = a plastoquinol + NAD(+) + n H(+)(out). It catalyses the reaction a plastoquinone + NADPH + (n+1) H(+)(in) = a plastoquinol + NADP(+) + n H(+)(out). Functionally, NDH shuttles electrons from NAD(P)H:plastoquinone, via FMN and iron-sulfur (Fe-S) centers, to quinones in the photosynthetic chain and possibly in a chloroplast respiratory chain. The immediate electron acceptor for the enzyme in this species is believed to be plastoquinone. Couples the redox reaction to proton translocation, and thus conserves the redox energy in a proton gradient. This is NAD(P)H-quinone oxidoreductase subunit 3, chloroplastic from Atropa belladonna (Belladonna).